The chain runs to 287 residues: Polyamine aminopropyltransferase (287 aa).

Residues 5–238 (EIWYETLHAN…GIMTFAWASQ (234 aa)) enclose the PABS domain. An S-methyl-5'-thioadenosine-binding site is contributed by Gln33. 2 residues coordinate spermidine: His64 and Asp88. S-methyl-5'-thioadenosine-binding positions include Glu108 and 140–141 (DG). The Proton acceptor role is filled by Asp158. 158–161 (DCTD) serves as a coordination point for spermidine. Residue Pro165 coordinates S-methyl-5'-thioadenosine.

It belongs to the spermidine/spermine synthase family. Homodimer or homotetramer.

The protein localises to the cytoplasm. It carries out the reaction S-adenosyl 3-(methylsulfanyl)propylamine + putrescine = S-methyl-5'-thioadenosine + spermidine + H(+). It functions in the pathway amine and polyamine biosynthesis; spermidine biosynthesis; spermidine from putrescine: step 1/1. Its function is as follows. Catalyzes the irreversible transfer of a propylamine group from the amino donor S-adenosylmethioninamine (decarboxy-AdoMet) to putrescine (1,4-diaminobutane) to yield spermidine. The chain is Polyamine aminopropyltransferase from Serratia proteamaculans (strain 568).